Consider the following 508-residue polypeptide: MSQEKYIMAIDQGTTSSRAIIFNQKGEKVSSSQKEFPQIFPHAGWVEHNANQIWNSVQSVIAGAFIESSIKPSQIEAIGITNQRETTVVWDKKTGVPIYNAIVWQSRQTAPIAEQLKQDGHTKMIHEKTGLVIDAYFSATKIRWILDHVPGAQERAEKGELLFGTIDTWLVWKLTDGAVHVTDYSNAARTMLYNIKDLTWDDEILELLNIPKDMLPEVKSNSEIYGKTAAFHFYGGEVPISGMAGDQQAALFGQLAFEPGMVKNTYGTGSFIIMNTGDEMQLSSNNLLTTIGYGINGKVHYALEGSIFIAGSAIQWLRDGLKMIETSPESEQFALASTSDDEVYVVPAFTGLGAPYWDSNARGSVFGLTRGTSKEDFVKATLQSIAYQVRDVIDTMQVDSGIDIQQLRVDGGAAMNNMLMQFQADILGIDIARAKNLETTALGAAFLAGLAVGYWEDMDALKELNATGQLFKASMNESRKEKLYKGWKRAVKATQVFTQEEDADDDAK.

Threonine 14 serves as a coordination point for ADP. Threonine 14, threonine 15, and serine 16 together coordinate ATP. A sn-glycerol 3-phosphate-binding site is contributed by threonine 14. An ADP-binding site is contributed by arginine 18. Positions 84, 85, and 136 each coordinate sn-glycerol 3-phosphate. Positions 84, 85, and 136 each coordinate glycerol. At histidine 232 the chain carries Phosphohistidine; by HPr. Aspartate 246 contributes to the sn-glycerol 3-phosphate binding site. Residues aspartate 246 and glutamine 247 each coordinate glycerol. Threonine 268 and glycine 311 together coordinate ADP. Positions 268, 311, 315, and 412 each coordinate ATP. ADP contacts are provided by glycine 412 and asparagine 416.

Belongs to the FGGY kinase family. Homotetramer and homodimer (in equilibrium). Post-translationally, the phosphoenolpyruvate-dependent sugar phosphotransferase system (PTS), including enzyme I, and histidine-containing protein (HPr) are required for the phosphorylation, which leads to the activation of the enzyme.

The enzyme catalyses glycerol + ATP = sn-glycerol 3-phosphate + ADP + H(+). It participates in polyol metabolism; glycerol degradation via glycerol kinase pathway; sn-glycerol 3-phosphate from glycerol: step 1/1. Its activity is regulated as follows. Activated by phosphorylation and inhibited by fructose 1,6-bisphosphate (FBP). Key enzyme in the regulation of glycerol uptake and metabolism. Catalyzes the phosphorylation of glycerol to yield sn-glycerol 3-phosphate. The sequence is that of Glycerol kinase from Streptococcus pyogenes serotype M12 (strain MGAS2096).